We begin with the raw amino-acid sequence, 242 residues long: Beta-carotene ketolase (242 aa).

It catalyses the reaction all-trans-beta-carotene + 2 AH2 + 2 O2 = echinenone + 2 A + 3 H2O. It carries out the reaction echinenone + 2 AH2 + 2 O2 = canthaxanthin + 2 A + 3 H2O. The protein operates within carotenoid biosynthesis; astaxanthin biosynthesis. In terms of biological role, converts beta-carotene to canthaxanthin via echinenone. In Paracoccus sp. (strain N81106 / MBIC 01143) (Agrobacterium aurantiacum), this protein is Beta-carotene ketolase (crtW).